An 842-amino-acid polypeptide reads, in one-letter code: Oxysterol-binding protein-related protein 7 (842 aa).

Residues 1–28 form a disordered region; the sequence is MDFQERDPPFLPESAQSSKPSSAQQASE. Over residues 14–27 the composition is skewed to low complexity; it reads SAQSSKPSSAQQAS. The 96-residue stretch at 47 to 142 folds into the PH domain; that stretch reads PERQEGHLLK…WVAQLRAHRL (96 aa). Residue Thr-171 is modified to Phosphothreonine. Residues Ser-217, Ser-226, Ser-256, and Ser-272 each carry the phosphoserine modification. Positions 330-369 are disordered; that stretch reads DMHQGSELSRMGVSEASTGQRRLHSLSTSSDTTADSFSSL. Positions 354-369 are enriched in low complexity; that stretch reads SLSTSSDTTADSFSSL.

Belongs to the OSBP family. In terms of tissue distribution, expressed in epithelium of small and large intestines (at protein level). Expressed in stomach, duodenum, jejunum, ascending colon, spleen, thymus, lymph node, trachea and leukocytes.

The protein resides in the cytoplasm. It localises to the cytosol. Its subcellular location is the endoplasmic reticulum membrane. The protein localises to the cell membrane. This is Oxysterol-binding protein-related protein 7 (OSBPL7) from Homo sapiens (Human).